We begin with the raw amino-acid sequence, 334 residues long: Phospho-N-acetylmuramoyl-pentapeptide-transferase (334 aa).

The next 9 helical transmembrane spans lie at 5 to 25 (VVWL…PVTI), 52 to 72 (PTMG…VLLV), 81 to 101 (GLVV…DDFI), 116 to 136 (KILG…FKLG), 148 to 168 (GISF…VLLG), 181 to 200 (GLAS…LALV), 230 to 250 (VFMG…GAVV), 256 to 276 (LLVV…IQVI), and 309 to 329 (FWLL…DFWL).

Belongs to the glycosyltransferase 4 family. MraY subfamily. Mg(2+) is required as a cofactor.

The protein localises to the cell membrane. The enzyme catalyses UDP-N-acetyl-alpha-D-muramoyl-L-alanyl-gamma-D-glutamyl-meso-2,6-diaminopimeloyl-D-alanyl-D-alanine + di-trans,octa-cis-undecaprenyl phosphate = di-trans,octa-cis-undecaprenyl diphospho-N-acetyl-alpha-D-muramoyl-L-alanyl-D-glutamyl-meso-2,6-diaminopimeloyl-D-alanyl-D-alanine + UMP. It functions in the pathway cell wall biogenesis; peptidoglycan biosynthesis. Catalyzes the initial step of the lipid cycle reactions in the biosynthesis of the cell wall peptidoglycan: transfers peptidoglycan precursor phospho-MurNAc-pentapeptide from UDP-MurNAc-pentapeptide onto the lipid carrier undecaprenyl phosphate, yielding undecaprenyl-pyrophosphoryl-MurNAc-pentapeptide, known as lipid I. The sequence is that of Phospho-N-acetylmuramoyl-pentapeptide-transferase from Desulforamulus reducens (strain ATCC BAA-1160 / DSM 100696 / MI-1) (Desulfotomaculum reducens).